A 1095-amino-acid polypeptide reads, in one-letter code: Actin cross-linking toxin VgrG1 (1095 aa).

The 384-residue stretch at 712–1095 (TPDFPTHFPK…TVIQQVESLV (384 aa)) folds into the ACD domain. Residue 723–727 (SIGIE) participates in ATP binding. Positions 727 and 789 each coordinate Mg(2+). Residue Ser-792 participates in ATP binding. Gln-873 contacts Mg(2+). Arg-979 is a binding site for ATP. Position 1050 (Glu-1050) interacts with Mg(2+).

Belongs to the VgrG protein family. Interacts with protein VC1417. It depends on Mg(2+) as a cofactor.

The protein localises to the secreted. It localises to the host cytoplasm. The protein resides in the host cytosol. Functionally, part of the type VI secretion system (T6SS) specialized secretion system, which delivers several virulence factors in both prokaryotic and eukaryotic cells during infection. Forms the spike at the tip of the elongating tube probably formed by hemolysin co-regulated protein/Hcp. Allows the delivery of the TseL antibacterial toxin to target cells where it exerts its toxicity. Also acts directly as an actin-directed toxin that catalyzes the covalent cross-linking of host cytoplasmic monomeric actin. Mediates the cross-link between 'Lys-50' of one monomer and 'Glu-270' of another actin monomer, resulting in formation of highly toxic actin oligomers that cause cell rounding. The toxin can be highly efficient at very low concentrations by acting on formin homology family proteins: toxic actin oligomers bind with high affinity to formins and adversely affect both nucleation and elongation abilities of formins, causing their potent inhibition in both profilin-dependent and independent manners. Acts as an acid--amino-acid ligase that transfers the gamma-phosphoryl group of ATP to the 'Glu-270' actin residue, resulting in the formation of an activated acyl phosphate intermediate. This intermediate is further hydrolyzed and the energy of hydrolysis is utilized for the formation of the amide bond between actin subunits. The polypeptide is Actin cross-linking toxin VgrG1 (Vibrio cholerae serotype O1 (strain ATCC 39541 / Classical Ogawa 395 / O395)).